We begin with the raw amino-acid sequence, 296 residues long: Probable endonuclease 4 (296 aa).

9 residues coordinate Zn(2+): H68, H109, E144, D178, H181, H213, D226, H228, and E258.

This sequence belongs to the AP endonuclease 2 family. Zn(2+) serves as cofactor.

It catalyses the reaction Endonucleolytic cleavage to 5'-phosphooligonucleotide end-products.. Functionally, endonuclease IV plays a role in DNA repair. It cleaves phosphodiester bonds at apurinic or apyrimidinic (AP) sites, generating a 3'-hydroxyl group and a 5'-terminal sugar phosphate. The sequence is that of Probable endonuclease 4 from Staphylococcus saprophyticus subsp. saprophyticus (strain ATCC 15305 / DSM 20229 / NCIMB 8711 / NCTC 7292 / S-41).